A 290-amino-acid polypeptide reads, in one-letter code: Ribosomal RNA small subunit methyltransferase A (290 aa).

S-adenosyl-L-methionine-binding residues include Asn-27, Leu-29, Gly-54, Glu-75, Asp-100, and Asn-125.

Belongs to the class I-like SAM-binding methyltransferase superfamily. rRNA adenine N(6)-methyltransferase family. RsmA subfamily.

The protein localises to the cytoplasm. The catalysed reaction is adenosine(1518)/adenosine(1519) in 16S rRNA + 4 S-adenosyl-L-methionine = N(6)-dimethyladenosine(1518)/N(6)-dimethyladenosine(1519) in 16S rRNA + 4 S-adenosyl-L-homocysteine + 4 H(+). In terms of biological role, specifically dimethylates two adjacent adenosines (A1518 and A1519) in the loop of a conserved hairpin near the 3'-end of 16S rRNA in the 30S particle. May play a critical role in biogenesis of 30S subunits. The polypeptide is Ribosomal RNA small subunit methyltransferase A (Streptococcus pneumoniae (strain Hungary19A-6)).